The chain runs to 319 residues: MKRIAILTSGGDAPGMNAATRAVVRKAIYEGLEVYGINYGFLGLVNGDIRKLELGSVGDLLHRGGTFLYSARYPEFATEEGQLKGIEQLKKHQIDGLVVIGGDGSYHGAEALTKRGFPTIGIPGTIDNDISGTDFTIGFDTALNTVLDALDKIRDTATSHERTFIIEVMGRDAGDIALWSGLAGGAEAIIVPEESFNMDDVVDRLNKGRERGKKHSIIVVAEGVMSGNEFAKQLAEYGDYHARVTVLGHVQRGGSPTAFDRVLASRLGARAVELLLENRGGLAVGIRENRIVENNIGEILKEKHTLDQKLFDLASILSI.

Glycine 11 contributes to the ATP binding site. Residue 21–25 participates in ADP binding; the sequence is RAVVR. ATP contacts are provided by residues 72-73 and 102-105; these read RY and GDGS. Residue aspartate 103 coordinates Mg(2+). Residue 125–127 participates in substrate binding; it reads TID. Aspartate 127 (proton acceptor) is an active-site residue. Arginine 154 contacts ADP. Substrate contacts are provided by residues arginine 162 and 169-171; that span reads MGR. ADP is bound by residues 185 to 187, arginine 211, and 213 to 215; these read GAE and KKH. Substrate contacts are provided by residues glutamate 222, arginine 243, and 249–252; that span reads HVQR.

Belongs to the phosphofructokinase type A (PFKA) family. ATP-dependent PFK group I subfamily. Prokaryotic clade 'B1' sub-subfamily. In terms of assembly, homotetramer. The cofactor is Mg(2+).

Its subcellular location is the cytoplasm. The catalysed reaction is beta-D-fructose 6-phosphate + ATP = beta-D-fructose 1,6-bisphosphate + ADP + H(+). It participates in carbohydrate degradation; glycolysis; D-glyceraldehyde 3-phosphate and glycerone phosphate from D-glucose: step 3/4. With respect to regulation, allosterically activated by ADP and other diphosphonucleosides, and allosterically inhibited by phosphoenolpyruvate. Its function is as follows. Catalyzes the phosphorylation of D-fructose 6-phosphate to fructose 1,6-bisphosphate by ATP, the first committing step of glycolysis. This Listeria welshimeri serovar 6b (strain ATCC 35897 / DSM 20650 / CCUG 15529 / CIP 8149 / NCTC 11857 / SLCC 5334 / V8) protein is ATP-dependent 6-phosphofructokinase.